Consider the following 237-residue polypeptide: Large ribosomal subunit protein uL1 (237 aa).

This sequence belongs to the universal ribosomal protein uL1 family. Part of the 50S ribosomal subunit.

Binds directly to 23S rRNA. The L1 stalk is quite mobile in the ribosome, and is involved in E site tRNA release. Its function is as follows. Protein L1 is also a translational repressor protein, it controls the translation of the L11 operon by binding to its mRNA. The protein is Large ribosomal subunit protein uL1 of Dehalococcoides mccartyi (strain ATCC BAA-2266 / KCTC 15142 / 195) (Dehalococcoides ethenogenes (strain 195)).